Here is a 482-residue protein sequence, read N- to C-terminus: MAHRLLRDAQADGWERSDFPIICESCLGDNPYVRMLRAEYDKECKICARPFTVFRWRPGRDARYKKTEICQTCCKLKNVCQVCLLDLEYGLPVQVRDTALAINSNDAIPRSDVNREYFAEEHDRKARAGIDYDSSHGKARPNDTILKLQRTAPYYKRNRAHVCSFYVRGECTRGAECPYRHEMPETGELSQQNIKDRYYGVNDPVALKLLGKAGEMPSLTPPDDESIRTLYIGGLNNRITEQDLRDQFYAHGEIESIRMVLQRACAFVTYTTREGAEKAAEELANKLVIKGIRLKLMWGKPQAPKPEDDEAGRQGHVAHGGMLPRAVISQQQSGDQPQPPGMEGQQQAPSGSYYFNIPAPPGAERTLYPSMDPQRMGALVKSQEGDGKPGPQQAAQAQASSSSGQSYPMPPQYYHGQYPPYYPPYGGYMPPPRMPYPPPPQYPPYQPMLATPAQSQASSSQQPAPATLHQAQVPPPQQTTQN.

A C3H1-type zinc finger spans residues 157–184 (RNRAHVCSFYVRGECTRGAECPYRHEMP). The RRM domain occupies 228-301 (RTLYIGGLNN…IRLKLMWGKP (74 aa)). 2 stretches are compositionally biased toward low complexity: residues 329-347 (SQQQ…GQQQ) and 389-428 (PGPQ…YGGY). Positions 329–482 (SQQQSGDQPQ…VPPPQQTTQN (154 aa)) are disordered. Pro residues predominate over residues 429–446 (MPPPRMPYPPPPQYPPYQ). Residues 452-466 (PAQSQASSSQQPAPA) show a composition bias toward low complexity. Residues 473–482 (VPPPQQTTQN) are compositionally biased toward pro residues.

In Oryza sativa subsp. japonica (Rice), this protein is Zinc finger CCCH domain-containing protein 40.